The chain runs to 118 residues: Large ribosomal subunit protein uL22 (118 aa).

It belongs to the universal ribosomal protein uL22 family. Part of the 50S ribosomal subunit.

Its function is as follows. This protein binds specifically to 23S rRNA; its binding is stimulated by other ribosomal proteins, e.g. L4, L17, and L20. It is important during the early stages of 50S assembly. It makes multiple contacts with different domains of the 23S rRNA in the assembled 50S subunit and ribosome. In terms of biological role, the globular domain of the protein is located near the polypeptide exit tunnel on the outside of the subunit, while an extended beta-hairpin is found that lines the wall of the exit tunnel in the center of the 70S ribosome. The chain is Large ribosomal subunit protein uL22 from Prosthecochloris aestuarii (strain DSM 271 / SK 413).